The chain runs to 726 residues: Catalase-peroxidase (726 aa).

Positions 93–216 form a cross-link, tryptophyl-tyrosyl-methioninium (Trp-Tyr) (with M-242); the sequence is WHSAGTYRVH…LAAVQMGLIY (124 aa). His-94 functions as the Proton acceptor in the catalytic mechanism. Positions 216–242 form a cross-link, tryptophyl-tyrosyl-methioninium (Tyr-Met) (with W-93); it reads YVNPEGPNGNPDPVAAAVDIRETFTRM. His-257 provides a ligand contact to heme b. The interval 471–490 is disordered; that stretch reads GSDKRGGANGARIRLSPQKD.

The protein belongs to the peroxidase family. Peroxidase/catalase subfamily. In terms of assembly, homodimer or homotetramer. Heme b is required as a cofactor. Post-translationally, formation of the three residue Trp-Tyr-Met cross-link is important for the catalase, but not the peroxidase activity of the enzyme.

It carries out the reaction H2O2 + AH2 = A + 2 H2O. It catalyses the reaction 2 H2O2 = O2 + 2 H2O. Bifunctional enzyme with both catalase and broad-spectrum peroxidase activity. The chain is Catalase-peroxidase from Methylacidiphilum infernorum (isolate V4) (Methylokorus infernorum (strain V4)).